The following is a 442-amino-acid chain: D-aminoacyl-tRNA deacylase (442 aa).

Belongs to the DtdA deacylase family. In terms of assembly, monomer. Zn(2+) is required as a cofactor.

The enzyme catalyses a D-aminoacyl-tRNA + H2O = a tRNA + a D-alpha-amino acid + H(+). It catalyses the reaction glycyl-tRNA(Ala) + H2O = tRNA(Ala) + glycine + H(+). D-aminoacyl-tRNA deacylase with broad substrate specificity. By recycling D-aminoacyl-tRNA to D-amino acids and free tRNA molecules, this enzyme counteracts the toxicity associated with the formation of D-aminoacyl-tRNA entities in vivo. The chain is D-aminoacyl-tRNA deacylase from Methanospirillum hungatei JF-1 (strain ATCC 27890 / DSM 864 / NBRC 100397 / JF-1).